Consider the following 491-residue polypeptide: Protein nucleotidyltransferase YdiU (491 aa).

Residues G88, G90, R91, K111, D123, G124, R174, and R181 each contribute to the ATP site. The Proton acceptor role is filled by D250. Residues N251 and D260 each contribute to the Mg(2+) site. Position 260 (D260) interacts with ATP. Residues D466–V484 are compositionally biased toward basic and acidic residues. Positions D466–T491 are disordered.

It belongs to the SELO family. Mg(2+) serves as cofactor. Mn(2+) is required as a cofactor.

It carries out the reaction L-seryl-[protein] + ATP = 3-O-(5'-adenylyl)-L-seryl-[protein] + diphosphate. It catalyses the reaction L-threonyl-[protein] + ATP = 3-O-(5'-adenylyl)-L-threonyl-[protein] + diphosphate. The catalysed reaction is L-tyrosyl-[protein] + ATP = O-(5'-adenylyl)-L-tyrosyl-[protein] + diphosphate. The enzyme catalyses L-histidyl-[protein] + UTP = N(tele)-(5'-uridylyl)-L-histidyl-[protein] + diphosphate. It carries out the reaction L-seryl-[protein] + UTP = O-(5'-uridylyl)-L-seryl-[protein] + diphosphate. It catalyses the reaction L-tyrosyl-[protein] + UTP = O-(5'-uridylyl)-L-tyrosyl-[protein] + diphosphate. Nucleotidyltransferase involved in the post-translational modification of proteins. It can catalyze the addition of adenosine monophosphate (AMP) or uridine monophosphate (UMP) to a protein, resulting in modifications known as AMPylation and UMPylation. The chain is Protein nucleotidyltransferase YdiU from Bradyrhizobium sp. (strain ORS 278).